Here is a 376-residue protein sequence, read N- to C-terminus: PqqA peptide cyclase (376 aa).

In terms of domain architecture, Radical SAM core spans 7–222 (VGLPLWLLAE…TNEYRDKLKA (216 aa)). Residues cysteine 21, cysteine 25, and cysteine 28 each coordinate [4Fe-4S] cluster.

The protein belongs to the radical SAM superfamily. PqqE family. As to quaternary structure, interacts with PqqD. The interaction is necessary for activity of PqqE. It depends on [4Fe-4S] cluster as a cofactor.

The enzyme catalyses [PQQ precursor protein] + S-adenosyl-L-methionine = E-Y cross-linked-[PQQ precursor protein] + 5'-deoxyadenosine + L-methionine + H(+). It participates in cofactor biosynthesis; pyrroloquinoline quinone biosynthesis. In terms of biological role, catalyzes the cross-linking of a glutamate residue and a tyrosine residue in the PqqA protein as part of the biosynthesis of pyrroloquinoline quinone (PQQ). In Pseudomonas putida (strain ATCC 700007 / DSM 6899 / JCM 31910 / BCRC 17059 / LMG 24140 / F1), this protein is PqqA peptide cyclase.